Consider the following 143-residue polypeptide: ATP synthase subunit b' (143 aa).

Residues 6 to 26 (ATLPVMALQFILLAVILNAVF) traverse the membrane as a helical segment.

This sequence belongs to the ATPase B chain family. F-type ATPases have 2 components, F(1) - the catalytic core - and F(0) - the membrane proton channel. F(1) has five subunits: alpha(3), beta(3), gamma(1), delta(1), epsilon(1). F(0) has four main subunits: a(1), b(1), b'(1) and c(10-14). The alpha and beta chains form an alternating ring which encloses part of the gamma chain. F(1) is attached to F(0) by a central stalk formed by the gamma and epsilon chains, while a peripheral stalk is formed by the delta, b and b' chains.

It is found in the cellular thylakoid membrane. Functionally, f(1)F(0) ATP synthase produces ATP from ADP in the presence of a proton or sodium gradient. F-type ATPases consist of two structural domains, F(1) containing the extramembraneous catalytic core and F(0) containing the membrane proton channel, linked together by a central stalk and a peripheral stalk. During catalysis, ATP synthesis in the catalytic domain of F(1) is coupled via a rotary mechanism of the central stalk subunits to proton translocation. In terms of biological role, component of the F(0) channel, it forms part of the peripheral stalk, linking F(1) to F(0). The b'-subunit is a diverged and duplicated form of b found in plants and photosynthetic bacteria. This is ATP synthase subunit b' from Microcystis aeruginosa (strain NIES-843 / IAM M-2473).